Reading from the N-terminus, the 287-residue chain is Nucleotide-binding protein Asuc_0930 (287 aa).

8-15 (GRSGAGKS) provides a ligand contact to ATP. 56–59 (DIRN) is a binding site for GTP.

Belongs to the RapZ-like family.

Its function is as follows. Displays ATPase and GTPase activities. The protein is Nucleotide-binding protein Asuc_0930 of Actinobacillus succinogenes (strain ATCC 55618 / DSM 22257 / CCUG 43843 / 130Z).